The primary structure comprises 387 residues: Formate-dependent phosphoribosylglycinamide formyltransferase (387 aa).

N(1)-(5-phospho-beta-D-ribosyl)glycinamide is bound by residues 15 to 16 (EL) and glutamate 75. ATP contacts are provided by residues arginine 106, lysine 147, 152 to 157 (SSGKGQ), 187 to 190 (EEFI), and glutamate 195. The 191-residue stretch at 111–301 (DLASNELNIR…EFELHLRAVL (191 aa)) folds into the ATP-grasp domain. Mg(2+)-binding residues include glutamate 260 and glutamate 272. Residues aspartate 279, lysine 349, and 356–357 (RR) each bind N(1)-(5-phospho-beta-D-ribosyl)glycinamide.

This sequence belongs to the PurK/PurT family. In terms of assembly, homodimer.

The enzyme catalyses N(1)-(5-phospho-beta-D-ribosyl)glycinamide + formate + ATP = N(2)-formyl-N(1)-(5-phospho-beta-D-ribosyl)glycinamide + ADP + phosphate + H(+). It functions in the pathway purine metabolism; IMP biosynthesis via de novo pathway; N(2)-formyl-N(1)-(5-phospho-D-ribosyl)glycinamide from N(1)-(5-phospho-D-ribosyl)glycinamide (formate route): step 1/1. Functionally, involved in the de novo purine biosynthesis. Catalyzes the transfer of formate to 5-phospho-ribosyl-glycinamide (GAR), producing 5-phospho-ribosyl-N-formylglycinamide (FGAR). Formate is provided by PurU via hydrolysis of 10-formyl-tetrahydrofolate. This is Formate-dependent phosphoribosylglycinamide formyltransferase from Prochlorococcus marinus (strain NATL1A).